A 374-amino-acid chain; its full sequence is Tuliposide A-converting enzyme b2, amyloplastic (374 aa).

An amyloplast-targeting transit peptide spans 1–68 (MSVALFCGPP…TNSSLSPSPT (68 aa)). Catalysis depends on Ser226, which acts as the Acyl-ester intermediate. Catalysis depends on charge relay system residues Asp316 and His348.

This sequence belongs to the AB hydrolase superfamily. As to quaternary structure, homodimer. As to expression, highly expressed in pistil and bulb scales. Lower expression in stem, and barely detected in root, leaf, petal and stamen.

The protein localises to the plastid. Its subcellular location is the amyloplast. The catalysed reaction is 6-tuliposide A = tulipalin A + D-glucose. Functionally, lactone-forming carboxylesterases, specifically catalyzing intramolecular transesterification, but not hydrolysis. Involved in the biosynthesis of tulipalins, defensive chemicals that show antimicrobial activities against a broad range of strains of bacteria and fungi. Substrates are 6-tuliposide A &gt; 6-tuliposide B. The protein is Tuliposide A-converting enzyme b2, amyloplastic (TCEA-B2) of Tulipa gesneriana (Garden tulip).